The sequence spans 21 residues: Protein YmjD (21 aa).

The sequence is that of Protein YmjD (ymjD) from Escherichia coli (strain K12).